A 150-amino-acid chain; its full sequence is Large ribosomal subunit protein bL9 (150 aa).

This sequence belongs to the bacterial ribosomal protein bL9 family.

Functionally, binds to the 23S rRNA. The protein is Large ribosomal subunit protein bL9 of Neisseria meningitidis serogroup A / serotype 4A (strain DSM 15465 / Z2491).